Here is a 452-residue protein sequence, read N- to C-terminus: Bifunctional protein GlmU (452 aa).

The interval 1–230 is pyrophosphorylase; it reads MSRSRSAIIL…ADEVLGVNSR (230 aa). UDP-N-acetyl-alpha-D-glucosamine contacts are provided by residues 10–13, Lys-24, Gln-75, and 80–81; these read LAAG and GT. Mg(2+) is bound at residue Asp-105. Gly-141, Glu-156, Asn-171, and Asn-228 together coordinate UDP-N-acetyl-alpha-D-glucosamine. Asn-228 contacts Mg(2+). A linker region spans residues 231–251; it reads ADLAEAEAAFQSRMRQSMMAD. Positions 252 to 452 are N-acetyltransferase; the sequence is GVTLIAPETV…ARKARKDSQT (201 aa). The UDP-N-acetyl-alpha-D-glucosamine site is built by Arg-317 and Lys-335. His-347 serves as the catalytic Proton acceptor. UDP-N-acetyl-alpha-D-glucosamine contacts are provided by Tyr-350 and Asn-361. Acetyl-CoA-binding positions include Ala-364, 370–371, Ser-389, Thr-407, and Arg-424; that span reads NY.

This sequence in the N-terminal section; belongs to the N-acetylglucosamine-1-phosphate uridyltransferase family. The protein in the C-terminal section; belongs to the transferase hexapeptide repeat family. In terms of assembly, homotrimer. Requires Mg(2+) as cofactor.

The protein localises to the cytoplasm. The enzyme catalyses alpha-D-glucosamine 1-phosphate + acetyl-CoA = N-acetyl-alpha-D-glucosamine 1-phosphate + CoA + H(+). It carries out the reaction N-acetyl-alpha-D-glucosamine 1-phosphate + UTP + H(+) = UDP-N-acetyl-alpha-D-glucosamine + diphosphate. Its pathway is nucleotide-sugar biosynthesis; UDP-N-acetyl-alpha-D-glucosamine biosynthesis; N-acetyl-alpha-D-glucosamine 1-phosphate from alpha-D-glucosamine 6-phosphate (route II): step 2/2. The protein operates within nucleotide-sugar biosynthesis; UDP-N-acetyl-alpha-D-glucosamine biosynthesis; UDP-N-acetyl-alpha-D-glucosamine from N-acetyl-alpha-D-glucosamine 1-phosphate: step 1/1. It functions in the pathway bacterial outer membrane biogenesis; LPS lipid A biosynthesis. Its function is as follows. Catalyzes the last two sequential reactions in the de novo biosynthetic pathway for UDP-N-acetylglucosamine (UDP-GlcNAc). The C-terminal domain catalyzes the transfer of acetyl group from acetyl coenzyme A to glucosamine-1-phosphate (GlcN-1-P) to produce N-acetylglucosamine-1-phosphate (GlcNAc-1-P), which is converted into UDP-GlcNAc by the transfer of uridine 5-monophosphate (from uridine 5-triphosphate), a reaction catalyzed by the N-terminal domain. This Maricaulis maris (strain MCS10) (Caulobacter maris) protein is Bifunctional protein GlmU.